Consider the following 433-residue polypeptide: Serine hydroxymethyltransferase (433 aa).

121–123 (AHV) serves as a coordination point for (6S)-5,6,7,8-tetrahydrofolate. At Lys227 the chain carries N6-(pyridoxal phosphate)lysine. (6S)-5,6,7,8-tetrahydrofolate is bound at residue Glu243.

Belongs to the SHMT family. As to quaternary structure, homodimer. Requires pyridoxal 5'-phosphate as cofactor.

It is found in the cytoplasm. The protein operates within amino-acid biosynthesis; glycine biosynthesis; glycine from L-serine: step 1/1. Functionally, catalyzes the reversible interconversion of serine and glycine with a modified folate serving as the one-carbon carrier. Also exhibits a pteridine-independent aldolase activity toward beta-hydroxyamino acids, producing glycine and aldehydes, via a retro-aldol mechanism. The chain is Serine hydroxymethyltransferase from Saccharolobus islandicus (strain Y.N.15.51 / Yellowstone #2) (Sulfolobus islandicus).